The sequence spans 427 residues: Pectin acetylesterase 5 (427 aa).

The signal sequence occupies residues 1 to 35; the sequence is MAIPRFSSLLRCRKWAKSDWLVASIGCVLIVFFLS. The N-linked (GlcNAc...) asparagine glycan is linked to N173. Residues S209, D305, and H372 each act as charge relay system in the active site. Residue N391 is glycosylated (N-linked (GlcNAc...) asparagine).

The protein belongs to the pectinacetylesterase family.

Its subcellular location is the secreted. It localises to the cell wall. Its function is as follows. Hydrolyzes acetyl esters in homogalacturonan regions of pectin. In type I primary cell wall, galacturonic acid residues of pectin can be acetylated at the O-2 and O-3 positions. Decreasing the degree of acetylation of pectin gels in vitro alters their physical properties. In Arabidopsis thaliana (Mouse-ear cress), this protein is Pectin acetylesterase 5.